The sequence spans 130 residues: Glycine cleavage system H protein (130 aa).

In terms of domain architecture, Lipoyl-binding spans 22 to 103 (QAWIGISDYA…PYANYIVVVA (82 aa)). Lysine 63 carries the post-translational modification N6-lipoyllysine.

Belongs to the GcvH family. In terms of assembly, the glycine cleavage system is composed of four proteins: P, T, L and H. (R)-lipoate serves as cofactor.

Functionally, the glycine cleavage system catalyzes the degradation of glycine. The H protein shuttles the methylamine group of glycine from the P protein to the T protein. The polypeptide is Glycine cleavage system H protein (Syntrophomonas wolfei subsp. wolfei (strain DSM 2245B / Goettingen)).